The chain runs to 447 residues: Kynurenine 3-monooxygenase (447 aa).

It belongs to the aromatic-ring hydroxylase family. KMO subfamily. It depends on FAD as a cofactor.

The enzyme catalyses L-kynurenine + NADPH + O2 + H(+) = 3-hydroxy-L-kynurenine + NADP(+) + H2O. Its pathway is cofactor biosynthesis; NAD(+) biosynthesis; quinolinate from L-kynurenine: step 1/3. Functionally, catalyzes the hydroxylation of L-kynurenine (L-Kyn) to form 3-hydroxy-L-kynurenine (L-3OHKyn). Required for synthesis of quinolinic acid. The polypeptide is Kynurenine 3-monooxygenase (Flavobacterium psychrophilum (strain ATCC 49511 / DSM 21280 / CIP 103535 / JIP02/86)).